The sequence spans 454 residues: Aspartokinase 3 (454 aa).

2 ACT domains span residues 312–388 and 389–454; these read ISKY…ALIM and VVGE…VLIS.

It belongs to the aspartokinase family. Monomer.

The enzyme catalyses L-aspartate + ATP = 4-phospho-L-aspartate + ADP. It functions in the pathway amino-acid biosynthesis; L-lysine biosynthesis via DAP pathway; (S)-tetrahydrodipicolinate from L-aspartate: step 1/4. The protein operates within amino-acid biosynthesis; L-methionine biosynthesis via de novo pathway; L-homoserine from L-aspartate: step 1/3. It participates in amino-acid biosynthesis; L-threonine biosynthesis; L-threonine from L-aspartate: step 1/5. Functionally, catalyzes the phosphorylation of the beta-carboxyl group of aspartic acid with ATP to yield 4-phospho-L-aspartate, which is involved in the branched biosynthetic pathway leading to the biosynthesis of amino acids threonine, isoleucine and methionine. The polypeptide is Aspartokinase 3 (yclM) (Bacillus subtilis (strain 168)).